We begin with the raw amino-acid sequence, 330 residues long: MAAAAAALAATEPPPAMPQAAGAGGPAARRDFYWLRSFLAGGIAGCCAKTTVAPLDRVKVLLQAHNHHYRHLGVFSTLRAVPKKEGYLGLYKGNGAMMIRIFPYGAIQFMAFEHYKTLITTKLGVSGHVHRLMAGSMAGMTAVICTYPLDMVRVRLAFQVKGEHTYTGIIHAFKTIYAKEGGFLGFYRGLMPTILGMAPYAGVSFFTFGTLKSVGLSYAPTLLGRPSSDNPNVLVLKTHINLLCGGVAGAIAQTISYPFDVTRRRMQLGAVLPEFEKCLTMRETMKYVYGHHGIRKGLYRGLSLNYIRCVPSQAVAFTTYELMKQFFHLN.

Solcar repeat units lie at residues 32–118, 126–214, and 236–326; these read FYWL…YKTL, SGHV…LKSV, and LKTH…MKQF. 6 helical membrane passes run 33–52, 95–112, 132–149, 189–209, 242–262, and 297–317; these read YWLRSFLAGGIAGCCAKTTV, GAMMIRIFPYGAIQFMAF, LMAGSMAGMTAVICTYPL, GLMPTILGMAPYAGVSFFTFG, LLCGGVAGAIAQTISYPFDVT, and GLYRGLSLNYIRCVPSQAVAF.

The protein belongs to the mitochondrial carrier (TC 2.A.29) family. As to expression, mostly in thyroid, liver, lung, kidney and to a lesser extent in heart and skeletal muscle.

The protein resides in the mitochondrion inner membrane. May be involved in the transport of coenzyme A in the mitochondrial matrix. Very little is known about the physiological function of this carrier. The polypeptide is Solute carrier family 25 member 16 (SLC25A16) (Bos taurus (Bovine)).